Consider the following 116-residue polypeptide: Methionine-R-sulfoxide reductase B1 (116 aa).

The 106-residue stretch at 1–106 (MSFCSFFGGE…FSSSLKFIPK (106 aa)) folds into the MsrB domain. Residues cysteine 23, cysteine 26, cysteine 71, and cysteine 74 each coordinate Zn(2+). The Nucleophile role is filled by selenocysteine 95. A non-standard amino acid (selenocysteine) is located at residue selenocysteine 95.

Belongs to the MsrB Met sulfoxide reductase family. Requires Zn(2+) as cofactor. In terms of processing, truncated MSRB1/SEPX1 proteins produced by failed UGA/Sec decoding are ubiquitinated by the CRL2(FEM1C) E3 ubiquitin-protein ligase complex.

It is found in the cytoplasm. The protein resides in the nucleus. The protein localises to the cytoskeleton. It carries out the reaction L-methionyl-[protein] + [thioredoxin]-disulfide + H2O = L-methionyl-(R)-S-oxide-[protein] + [thioredoxin]-dithiol. The catalysed reaction is [thioredoxin]-disulfide + L-methionine + H2O = L-methionine (R)-S-oxide + [thioredoxin]-dithiol. Its function is as follows. Methionine-sulfoxide reductase that specifically reduces methionine (R)-sulfoxide back to methionine. While in many cases, methionine oxidation is the result of random oxidation following oxidative stress, methionine oxidation is also a post-translational modification that takes place on specific residue. Acts as a regulator of actin assembly by reducing methionine (R)-sulfoxide mediated by MICALs (MICAL1, MICAL2 or MICAL3) on actin, thereby promoting filament repolymerization. Plays a role in innate immunity by reducing oxidized actin, leading to actin repolymerization in macrophages. This chain is Methionine-R-sulfoxide reductase B1 (MSRB1), found in Bos taurus (Bovine).